Consider the following 237-residue polypeptide: Coat protein (237 aa).

The segment at 1–28 (MSAPASTTQATGSTTSTTTKTAGATPAT) is disordered.

It belongs to the potexvirus capsid protein family.

The protein resides in the virion. Its function is as follows. Required for genome encapsidation. Forms ribonucleoprotein complexes along with TGB1 helicase and viral RNA. The sequence is that of Coat protein from Brassica campestris (Field mustard).